Reading from the N-terminus, the 54-residue chain is Large ribosomal subunit protein bL33 (54 aa).

This sequence belongs to the bacterial ribosomal protein bL33 family.

The polypeptide is Large ribosomal subunit protein bL33 (Corynebacterium glutamicum (strain R)).